A 999-amino-acid polypeptide reads, in one-letter code: Helicase required for RNAi-mediated heterochromatin assembly 1 (999 aa).

A disordered region spans residues Glu61–Arg90. The segment covering Lys70–Ser88 has biased composition (basic and acidic residues). A Phosphoserine modification is found at Ser94. Positions Arg106–Ala124 are enriched in basic and acidic residues. A disordered region spans residues Arg106 to Arg131. Gly393 to Ser400 serves as a coordination point for ATP.

Cid12, hrr1 and rdp1 interact forming the RNA-directed RNA polymerase complex (RDRC). The RDRC complex interacts with the RITS complex via interaction between ago1 and hrr1. Clr4 has a role in mediating this interaction.

The protein resides in the cytoplasm. It is found in the nucleus. The enzyme catalyses ATP + H2O = ADP + phosphate + H(+). In terms of biological role, has a role in the RNA interference (RNAi) pathway which is important for heterochromatin formation and accurate chromosome segregation. A member of the RNA-directed RNA polymerase complex (RDRC) which is involved in the generation of small interfering RNAs (siRNAs) and mediate their association with the RNA-induced transcriptional silencing (RITS) complex. RITS acts as a priming complex for dsRNA synthesis at the site of non-coding centromeric RNA. The protein is Helicase required for RNAi-mediated heterochromatin assembly 1 (hrr1) of Schizosaccharomyces pombe (strain 972 / ATCC 24843) (Fission yeast).